The chain runs to 358 residues: Phosphoserine aminotransferase (358 aa).

Arg41 is a binding site for L-glutamate. Residues 75 to 76 (AS), Trp100, Thr148, Asp167, and Gln190 each bind pyridoxal 5'-phosphate. Residue Lys191 is modified to N6-(pyridoxal phosphate)lysine. 233-234 (NT) contributes to the pyridoxal 5'-phosphate binding site.

The protein belongs to the class-V pyridoxal-phosphate-dependent aminotransferase family. SerC subfamily. As to quaternary structure, homodimer. Pyridoxal 5'-phosphate is required as a cofactor.

It localises to the cytoplasm. The catalysed reaction is O-phospho-L-serine + 2-oxoglutarate = 3-phosphooxypyruvate + L-glutamate. The enzyme catalyses 4-(phosphooxy)-L-threonine + 2-oxoglutarate = (R)-3-hydroxy-2-oxo-4-phosphooxybutanoate + L-glutamate. It participates in amino-acid biosynthesis; L-serine biosynthesis; L-serine from 3-phospho-D-glycerate: step 2/3. The protein operates within cofactor biosynthesis; pyridoxine 5'-phosphate biosynthesis; pyridoxine 5'-phosphate from D-erythrose 4-phosphate: step 3/5. In terms of biological role, catalyzes the reversible conversion of 3-phosphohydroxypyruvate to phosphoserine and of 3-hydroxy-2-oxo-4-phosphonooxybutanoate to phosphohydroxythreonine. The chain is Phosphoserine aminotransferase from Campylobacter lari (strain RM2100 / D67 / ATCC BAA-1060).